The chain runs to 369 residues: D-alanine--D-alanine ligase (369 aa).

Residues 152 to 359 (KKLFAAEGLP…YPSLLATMVE (208 aa)) form the ATP-grasp domain. 180-235 (RERLGLPVFVKPARGGSSIGVSRVSSWDELDAAVAAARDHDPKVIVEAAIAGRELE) contacts ATP. Mg(2+) contacts are provided by aspartate 314, glutamate 326, and asparagine 328.

It belongs to the D-alanine--D-alanine ligase family. Requires Mg(2+) as cofactor. The cofactor is Mn(2+).

It localises to the cytoplasm. It carries out the reaction 2 D-alanine + ATP = D-alanyl-D-alanine + ADP + phosphate + H(+). It functions in the pathway cell wall biogenesis; peptidoglycan biosynthesis. Functionally, cell wall formation. This is D-alanine--D-alanine ligase from Mycobacterium avium (strain 104).